We begin with the raw amino-acid sequence, 144 residues long: Large ribosomal subunit protein uL16 (144 aa).

This sequence belongs to the universal ribosomal protein uL16 family. In terms of assembly, part of the 50S ribosomal subunit.

Binds 23S rRNA and is also seen to make contacts with the A and possibly P site tRNAs. The chain is Large ribosomal subunit protein uL16 from Lysinibacillus sphaericus (strain C3-41).